Here is a 151-residue protein sequence, read N- to C-terminus: 3-hydroxyacyl-[acyl-carrier-protein] dehydratase FabZ (151 aa).

The active site involves H54.

This sequence belongs to the thioester dehydratase family. FabZ subfamily.

The protein localises to the cytoplasm. The enzyme catalyses a (3R)-hydroxyacyl-[ACP] = a (2E)-enoyl-[ACP] + H2O. In terms of biological role, involved in unsaturated fatty acids biosynthesis. Catalyzes the dehydration of short chain beta-hydroxyacyl-ACPs and long chain saturated and unsaturated beta-hydroxyacyl-ACPs. This is 3-hydroxyacyl-[acyl-carrier-protein] dehydratase FabZ from Klebsiella pneumoniae (strain 342).